A 476-amino-acid polypeptide reads, in one-letter code: 3-ketoacyl-CoA synthase 12 (476 aa).

The signal sequence occupies residues 1-25; it reads MDLLFLFFSLLLSYLFFKIWKLIDS. Residues 26 to 313 enclose the FAE domain; the sequence is KQDKDCYILD…FMLKLLIKKI (288 aa). Catalysis depends on residues cysteine 168, histidine 247, histidine 344, histidine 348, histidine 377, and asparagine 381.

The protein belongs to the thiolase-like superfamily. Chalcone/stilbene synthases family. As to expression, expressed in siliques, flowers and leaves.

Its subcellular location is the endoplasmic reticulum. The enzyme catalyses a very-long-chain acyl-CoA + malonyl-CoA + H(+) = a very-long-chain 3-oxoacyl-CoA + CO2 + CoA. Its pathway is lipid metabolism; fatty acid biosynthesis. This is 3-ketoacyl-CoA synthase 12 from Arabidopsis thaliana (Mouse-ear cress).